The sequence spans 533 residues: Calcitonin receptor (533 aa).

Residues Met-1 to Gln-41 form the signal peptide. Over Ala-42 to Tyr-163 the chain is Extracellular. N-linked (GlcNAc...) asparagine glycans are attached at residues Asn-45, Asn-90, Asn-142, and Asn-147. 3 disulfide bridges follow: Cys-72/Cys-98, Cys-89/Cys-129, and Cys-112/Cys-151. The chain crosses the membrane as a helical span at residues Val-164 to Ile-186. Residues Phe-187–Val-198 lie on the Cytoplasmic side of the membrane. Residues Thr-199 to Leu-219 traverse the membrane as a helical segment. The Extracellular segment spans residues Val-220–Cys-273. Cys-273 and Cys-343 are oxidised to a cystine. Residues Lys-274 to Ile-296 form a helical membrane-spanning segment. Residues Tyr-297–Leu-313 are Cytoplasmic-facing. The chain crosses the membrane as a helical span at residues Arg-314–Thr-334. Residues Arg-335 to His-350 are Extracellular-facing. Residues Leu-351–Val-374 form a helical membrane-spanning segment. Residues Arg-375–Lys-394 lie on the Cytoplasmic side of the membrane. The chain crosses the membrane as a helical span at residues Ala-395–Phe-413. The Extracellular portion of the chain corresponds to Pro-414 to Val-421. Residues Leu-422–Cys-448 traverse the membrane as a helical segment. Topologically, residues Asn-449–Ala-533 are cytoplasmic.

This sequence belongs to the G-protein coupled receptor 2 family. As to quaternary structure, heterodimer of CALCR and RAMP1, RAMP2 or RAMP3; the receptor complexes function as AMYR1, AMYR2 and AMYR3 receptors, respectively, and respond to amylin/IAPP, calcitonin/CT and CGRP1 ligands. Interacts with GPRASP2.

Its subcellular location is the cell membrane. Functionally, g protein-coupled receptor activated by ligand peptides amylin (IAPP), calcitonin (CT/CALCA) and calcitonin gene-related peptide type 1 (CGRP1/CALCA). CALCR interacts with receptor-activity-modifying proteins RAMP1, 2 and 3 to form receptor complexes AMYR1, 2 and 3, respectively. IAPP, CT and CGRP1 activate CALCR and AMYRs with distinct modes of receptor activation resulting in specific phenotypes. Ligand binding causes a conformation change that triggers signaling via guanine nucleotide-binding proteins (G proteins) and modulates the activity of downstream effectors. Activates cAMP-dependent pathway. The protein is Calcitonin receptor of Mus musculus (Mouse).